The following is a 173-amino-acid chain: Photosystem I assembly protein Ycf3 (173 aa).

TPR repeat units follow at residues 35–68 (AYIYYRDGLAAQNNGDYSEALEYYKESLLLEENK), 72–105 (GETLKNMAIIYMSNGEEDLSIETYEKALVENPKQ), and 120–153 (GRYAEQNGDLDQRDIWYDKAAEVWSKAVRLYPGG).

The protein belongs to the Ycf3 family.

The protein resides in the cellular thylakoid membrane. Its function is as follows. Essential for the assembly of the photosystem I (PSI) complex. May act as a chaperone-like factor to guide the assembly of the PSI subunits. In Prochlorococcus marinus (strain MIT 9215), this protein is Photosystem I assembly protein Ycf3.